Reading from the N-terminus, the 337-residue chain is Perakine reductase (337 aa).

Y57 functions as the Proton donor in the catalytic mechanism. Position 126 (H126) interacts with substrate. An NADP(+)-binding site is contributed by 205 to 214 (SPIGRGLFAG).

It belongs to the aldo/keto reductase family.

It carries out the reaction raucaffrinoline + NADP(+) = perakine + NADPH + H(+). Aldo-keto reductase involved in the biosynthesis of monoterpenoid indole alkaloids. Broad substrate specificity enzyme with a high selectivity in the group of alkaloids. Can use perakine, 19(S),20(R)-dihydro-peraksine-17,21-al, cinnamic aldehyde, p-coumaric aldehyde and 3-(3,4,5-trimethoxyphenyl)propanal as substrates, but not ketosteroids such as progesterone. NADPH could not be replaced by NADH. In Rauvolfia serpentina (Serpentine wood), this protein is Perakine reductase (PR).